We begin with the raw amino-acid sequence, 368 residues long: Alkaline phosphatase L (368 aa).

A signal peptide spans 1 to 23 (MFKRSLIAASLSVAALVSAQAMA).

This sequence belongs to the PstS family. As to quaternary structure, homodimer.

It is found in the secreted. The protein localises to the periplasm. It catalyses the reaction a phosphate monoester + H2O = an alcohol + phosphate. Has both a phosphomonoesterase and phosphodiesterase activity. The polypeptide is Alkaline phosphatase L (Pseudomonas aeruginosa (strain ATCC 15692 / DSM 22644 / CIP 104116 / JCM 14847 / LMG 12228 / 1C / PRS 101 / PAO1)).